We begin with the raw amino-acid sequence, 502 residues long: Maturase K (502 aa).

It belongs to the intron maturase 2 family. MatK subfamily.

It is found in the plastid. It localises to the chloroplast. Usually encoded in the trnK tRNA gene intron. Probably assists in splicing its own and other chloroplast group II introns. The protein is Maturase K of Brassica oleracea (Wild cabbage).